Here is an 893-residue protein sequence, read N- to C-terminus: Valine--tRNA ligase (893 aa).

Residues 57 to 67 (PNVTGTLHMGH) carry the 'HIGH' region motif. A 'KMSKS' region motif is present at residues 545–549 (KMSKS). K548 lines the ATP pocket. Residues 821 to 855 (TSGSVDLEAERKRLEKDLAAAQKELATTEGKLGNE) are a coiled coil.

The protein belongs to the class-I aminoacyl-tRNA synthetase family. ValS type 1 subfamily. Monomer.

Its subcellular location is the cytoplasm. It catalyses the reaction tRNA(Val) + L-valine + ATP = L-valyl-tRNA(Val) + AMP + diphosphate. In terms of biological role, catalyzes the attachment of valine to tRNA(Val). As ValRS can inadvertently accommodate and process structurally similar amino acids such as threonine, to avoid such errors, it has a 'posttransfer' editing activity that hydrolyzes mischarged Thr-tRNA(Val) in a tRNA-dependent manner. This Nocardia farcinica (strain IFM 10152) protein is Valine--tRNA ligase.